A 136-amino-acid chain; its full sequence is ATP synthase epsilon chain (136 aa).

Belongs to the ATPase epsilon chain family. F-type ATPases have 2 components, CF(1) - the catalytic core - and CF(0) - the membrane proton channel. CF(1) has five subunits: alpha(3), beta(3), gamma(1), delta(1), epsilon(1). CF(0) has three main subunits: a, b and c.

The protein localises to the cell membrane. Its function is as follows. Produces ATP from ADP in the presence of a proton gradient across the membrane. This chain is ATP synthase epsilon chain, found in Herpetosiphon aurantiacus (strain ATCC 23779 / DSM 785 / 114-95).